The chain runs to 230 residues: Large ribosomal subunit protein uL1 (230 aa).

Belongs to the universal ribosomal protein uL1 family. As to quaternary structure, part of the 50S ribosomal subunit.

Binds directly to 23S rRNA. The L1 stalk is quite mobile in the ribosome, and is involved in E site tRNA release. Its function is as follows. Protein L1 is also a translational repressor protein, it controls the translation of the L11 operon by binding to its mRNA. The sequence is that of Large ribosomal subunit protein uL1 from Nitrosospira multiformis (strain ATCC 25196 / NCIMB 11849 / C 71).